Reading from the N-terminus, the 154-residue chain is Endoribonuclease YbeY (154 aa).

Residues His-113, His-117, and His-123 each contribute to the Zn(2+) site.

It belongs to the endoribonuclease YbeY family. Requires Zn(2+) as cofactor.

It is found in the cytoplasm. Functionally, single strand-specific metallo-endoribonuclease involved in late-stage 70S ribosome quality control and in maturation of the 3' terminus of the 16S rRNA. This chain is Endoribonuclease YbeY, found in Vibrio vulnificus (strain YJ016).